We begin with the raw amino-acid sequence, 353 residues long: Sphingosine 1-phosphate receptor 2 (353 aa).

Residues 1–34 (MGSLYSEYLNPNKVQEHYNYTKETLETQETTSRQ) lie on the Extracellular side of the membrane. An N-linked (GlcNAc...) asparagine glycan is attached at Asn-19. The chain crosses the membrane as a helical span at residues 35–59 (VASAFIVILCCAIVVENLLVLIAVA). At 60 to 66 (RNSKFHS) the chain is on the cytoplasmic side. The helical transmembrane segment at 67 to 95 (AMYLFLGNLAASDLLAGVAFVANTLLSGS) threads the bilayer. Topologically, residues 96–109 (VTLRLTPVQWFARE) are extracellular. Residues 110–128 (GSAFITLSASVFSLLAIAI) traverse the membrane as a helical segment. At 129 to 147 (ERHVAIAKVKLYGSDKSCR) the chain is on the cytoplasmic side. Residues 148–173 (MLLLIGASWLISLVLGGLPILGWNCL) form a helical membrane-spanning segment. The Extracellular segment spans residues 174 to 189 (GHLEACSTVLPLYAKH). Residues 190–210 (YVLCVVTIFSIILLAIVALYV) form a helical membrane-spanning segment. Topologically, residues 211–233 (RIYCVVRSSHADMAAPQTLALLK) are cytoplasmic. A helical transmembrane segment spans residues 234–255 (TVTIVLGVFIVCWLPAFSILLL). The Extracellular portion of the chain corresponds to 256–271 (DYACPVHSCPILYKAH). Residues 272 to 292 (YFFAVSTLNSLLNPVIYTWRS) traverse the membrane as a helical segment. Over 293–353 (RDLRREVLRP…PTFLEGNTVV (61 aa)) the chain is Cytoplasmic. Cys-305 carries S-palmitoyl cysteine lipidation.

It belongs to the G-protein coupled receptor 1 family.

The protein localises to the cell membrane. Its function is as follows. Receptor for the lysosphingolipid sphingosine 1-phosphate (S1P). S1P is a bioactive lysophospholipid that elicits diverse physiological effects on most types of cells and tissues. When expressed in rat HTC4 hepatoma cells, is capable of mediating S1P-induced cell proliferation and suppression of apoptosis. Receptor for the chemokine-like protein FAM19A5. Mediates the inhibitory effect of FAM19A5 on vascular smooth muscle cell proliferation and migration. In lymphoid follicles, couples the binding of S1P to the activation of GNA13 and downstream inhibition of AKT activation leading to suppression of germinal center (GC) B cell growth and migration outside the GC niche. The polypeptide is Sphingosine 1-phosphate receptor 2 (S1PR2) (Homo sapiens (Human)).